A 608-amino-acid polypeptide reads, in one-letter code: tRNA (guanine(37)-N(1))-methyltransferase 1 (608 aa).

Residues 207-229 are disordered; that stretch reads SRPKKKKRRKEEERSEGKKRTGK. Basic and acidic residues predominate over residues 216-229; the sequence is KEEERSEGKKRTGK. S-adenosyl-L-methionine contacts are provided by residues Arg-425, 463 to 464, 491 to 492, and Asn-514; these read DL and DG.

Belongs to the class I-like SAM-binding methyltransferase superfamily. TRM5/TYW2 family. As to quaternary structure, monomer.

The protein resides in the mitochondrion matrix. The protein localises to the nucleus. It localises to the cytoplasm. The catalysed reaction is guanosine(37) in tRNA + S-adenosyl-L-methionine = N(1)-methylguanosine(37) in tRNA + S-adenosyl-L-homocysteine + H(+). Specifically methylates the N1 position of guanosine-37 in various cytoplasmic and mitochondrial tRNAs. Methylation is not dependent on the nature of the nucleoside 5' of the target nucleoside. This is the first step in the biosynthesis of wybutosine (yW), a modified base adjacent to the anticodon of tRNAs and required for accurate decoding. The polypeptide is tRNA (guanine(37)-N(1))-methyltransferase 1 (Vitis vinifera (Grape)).